A 228-amino-acid polypeptide reads, in one-letter code: ATP-dependent dethiobiotin synthetase BioD (228 aa).

12-17 contacts ATP; the sequence is EIGKTT. Residue T16 participates in Mg(2+) binding. K37 is a catalytic residue. S41 contributes to the substrate binding site. ATP is bound by residues D54, 116-119, and 205-207; these read EGAG and PRL. Mg(2+)-binding residues include D54 and E116.

Belongs to the dethiobiotin synthetase family. Homodimer. Mg(2+) serves as cofactor.

Its subcellular location is the cytoplasm. The enzyme catalyses (7R,8S)-7,8-diammoniononanoate + CO2 + ATP = (4R,5S)-dethiobiotin + ADP + phosphate + 3 H(+). The protein operates within cofactor biosynthesis; biotin biosynthesis; biotin from 7,8-diaminononanoate: step 1/2. Its function is as follows. Catalyzes a mechanistically unusual reaction, the ATP-dependent insertion of CO2 between the N7 and N8 nitrogen atoms of 7,8-diaminopelargonic acid (DAPA, also called 7,8-diammoniononanoate) to form a ureido ring. The chain is ATP-dependent dethiobiotin synthetase BioD from Pseudomonas aeruginosa (strain UCBPP-PA14).